A 343-amino-acid chain; its full sequence is Aspartate carbamoyltransferase catalytic subunit (343 aa).

Residues R91 and T92 each contribute to the carbamoyl phosphate site. Position 119 (K119) interacts with L-aspartate. Carbamoyl phosphate is bound by residues R141, H171, and Q174. Residues R204 and R259 each coordinate L-aspartate. Positions 300 and 301 each coordinate carbamoyl phosphate.

The protein belongs to the aspartate/ornithine carbamoyltransferase superfamily. ATCase family. In terms of assembly, heterododecamer (2C3:3R2) of six catalytic PyrB chains organized as two trimers (C3), and six regulatory PyrI chains organized as three dimers (R2).

It carries out the reaction carbamoyl phosphate + L-aspartate = N-carbamoyl-L-aspartate + phosphate + H(+). Its pathway is pyrimidine metabolism; UMP biosynthesis via de novo pathway; (S)-dihydroorotate from bicarbonate: step 2/3. Its function is as follows. Catalyzes the condensation of carbamoyl phosphate and aspartate to form carbamoyl aspartate and inorganic phosphate, the committed step in the de novo pyrimidine nucleotide biosynthesis pathway. In Burkholderia mallei (strain NCTC 10247), this protein is Aspartate carbamoyltransferase catalytic subunit.